The following is a 502-amino-acid chain: Glycerol kinase (502 aa).

T14 is a binding site for ADP. Positions 14, 15, and 16 each coordinate ATP. A sn-glycerol 3-phosphate-binding site is contributed by T14. ADP is bound at residue R18. The sn-glycerol 3-phosphate site is built by R84, E85, Y136, and D246. The glycerol site is built by R84, E85, Y136, D246, and Q247. T268 and G311 together coordinate ADP. ATP-binding residues include T268, G311, Q315, and G412. The ADP site is built by G412 and N416.

This sequence belongs to the FGGY kinase family. As to quaternary structure, homotetramer and homodimer (in equilibrium). Heterodimer with EIIA-Glc. Binds 1 zinc ion per glycerol kinase EIIA-Glc dimer. The zinc ion is important for dimerization.

It carries out the reaction glycerol + ATP = sn-glycerol 3-phosphate + ADP + H(+). The protein operates within polyol metabolism; glycerol degradation via glycerol kinase pathway; sn-glycerol 3-phosphate from glycerol: step 1/1. Its activity is regulated as follows. Activity of this regulatory enzyme is affected by several metabolites. Allosterically and non-competitively inhibited by fructose 1,6-bisphosphate (FBP) and unphosphorylated phosphocarrier protein EIIA-Glc (III-Glc), an integral component of the bacterial phosphotransferase (PTS) system. Key enzyme in the regulation of glycerol uptake and metabolism. Catalyzes the phosphorylation of glycerol to yield sn-glycerol 3-phosphate. This Shigella dysenteriae serotype 1 (strain Sd197) protein is Glycerol kinase.